Reading from the N-terminus, the 443-residue chain is Trihelix transcription factor ASIL2 (443 aa).

Positions 1-82 (MEDDEDIRSQ…RPTGGGGRED (82 aa)) are disordered. Residues 38 to 48 (YSLTPPGNSSQ) show a composition bias toward polar residues. Residues 64–78 (SGGGNNSSGRPTGGG) are compositionally biased toward gly residues. Residues 84–144 (WSEAATAVLI…QCKNRIDTVK (61 aa)) form the Myb-like domain. Disordered regions lie at residues 238–350 (FGGS…GNKW) and 413–443 (RRMG…LGNN). Positions 239-249 (GGSGGGGGGGS) are enriched in gly residues. The span at 271–286 (TLPQQGRTLPQQQQQG) shows a compositional bias: low complexity. The short motif at 290 to 303 (KRCSESKRWRFRKR) is the Bipartite nuclear localization signal element. Basic and acidic residues predominate over residues 333–350 (MKTEEKKKQDGDGVGNKW). The stretch at 360–414 (FGEAYEQTENAKLQQVVEMEKERMKFLKELELQRMQFFVKTQLEISQLKQQHGRR) forms a coiled coil. The span at 428-443 (NNINAIVNNNNDLGNN) shows a compositional bias: low complexity.

The protein resides in the nucleus. In terms of biological role, transcription regulator that may repress the maturation program during early embryogenesis. This is Trihelix transcription factor ASIL2 from Arabidopsis thaliana (Mouse-ear cress).